The following is a 273-amino-acid chain: 4-hydroxy-tetrahydrodipicolinate reductase (273 aa).

Residues 12–17 (GAGGRM) and Glu38 each bind NAD(+). NADP(+) is bound at residue Arg39. NAD(+) is bound by residues 102 to 104 (GTT) and 126 to 129 (AANF). Catalysis depends on His159, which acts as the Proton donor/acceptor. His160 lines the (S)-2,3,4,5-tetrahydrodipicolinate pocket. Residue Lys163 is the Proton donor of the active site. A (S)-2,3,4,5-tetrahydrodipicolinate-binding site is contributed by 169-170 (GT).

Belongs to the DapB family. In terms of assembly, homotetramer.

The protein localises to the cytoplasm. It catalyses the reaction (S)-2,3,4,5-tetrahydrodipicolinate + NAD(+) + H2O = (2S,4S)-4-hydroxy-2,3,4,5-tetrahydrodipicolinate + NADH + H(+). It carries out the reaction (S)-2,3,4,5-tetrahydrodipicolinate + NADP(+) + H2O = (2S,4S)-4-hydroxy-2,3,4,5-tetrahydrodipicolinate + NADPH + H(+). It functions in the pathway amino-acid biosynthesis; L-lysine biosynthesis via DAP pathway; (S)-tetrahydrodipicolinate from L-aspartate: step 4/4. In terms of biological role, catalyzes the conversion of 4-hydroxy-tetrahydrodipicolinate (HTPA) to tetrahydrodipicolinate. This Pectobacterium carotovorum subsp. carotovorum (strain PC1) protein is 4-hydroxy-tetrahydrodipicolinate reductase.